The chain runs to 282 residues: Putative SWIB domain-containing protein 070L (282 aa).

Positions 1–16 are enriched in low complexity; that stretch reads MFQTTPKQVKPTTVPK. Residues 1–21 form a disordered region; sequence MFQTTPKQVKPTTVPKTGRKN. The region spanning 97 to 181 is the SWIB/MDM2 domain; sequence GLEKPRMISE…QKYLKHCFDE (85 aa). Residues 199–282 form a disordered region; it reads TDDQTTAEEA…KVKKEHKIKK (84 aa). Basic and acidic residues predominate over residues 262-275; it reads GKKDKENIPLEKVK.

It belongs to the IIV-6 306R family.

This chain is Putative SWIB domain-containing protein 070L, found in Invertebrate iridescent virus 3 (IIV-3).